The following is a 119-amino-acid chain: Methylglyoxal synthase (119 aa).

The 119-residue stretch at 1–119 (MKIALIAHDK…KTAELIIKQF (119 aa)) folds into the MGS-like domain. Residues H8, K12, 34 to 37 (TGTT), and 54 to 55 (SG) each bind substrate. D60 serves as the catalytic Proton donor/acceptor. H87 serves as a coordination point for substrate.

This sequence belongs to the methylglyoxal synthase family.

The catalysed reaction is dihydroxyacetone phosphate = methylglyoxal + phosphate. Catalyzes the formation of methylglyoxal from dihydroxyacetone phosphate. The polypeptide is Methylglyoxal synthase (Clostridium beijerinckii (strain ATCC 51743 / NCIMB 8052) (Clostridium acetobutylicum)).